Here is an 87-residue protein sequence, read N- to C-terminus: Small ribosomal subunit protein uS19 (87 aa).

The protein belongs to the universal ribosomal protein uS19 family.

Its function is as follows. Protein S19 forms a complex with S13 that binds strongly to the 16S ribosomal RNA. This chain is Small ribosomal subunit protein uS19 (rpsS), found in Mycoplasma genitalium (strain ATCC 33530 / DSM 19775 / NCTC 10195 / G37) (Mycoplasmoides genitalium).